The chain runs to 157 residues: Ribosomal RNA large subunit methyltransferase H (157 aa).

Residues Leu-73, Gly-105, and 124–129 each bind S-adenosyl-L-methionine; that span reads LSKMTF.

Belongs to the RNA methyltransferase RlmH family. Homodimer.

The protein localises to the cytoplasm. It catalyses the reaction pseudouridine(1915) in 23S rRNA + S-adenosyl-L-methionine = N(3)-methylpseudouridine(1915) in 23S rRNA + S-adenosyl-L-homocysteine + H(+). In terms of biological role, specifically methylates the pseudouridine at position 1915 (m3Psi1915) in 23S rRNA. The chain is Ribosomal RNA large subunit methyltransferase H from Phocaeicola vulgatus (strain ATCC 8482 / DSM 1447 / JCM 5826 / CCUG 4940 / NBRC 14291 / NCTC 11154) (Bacteroides vulgatus).